A 1410-amino-acid polypeptide reads, in one-letter code: SNF2 domain-containing protein CLASSY 3 (1410 aa).

Over residues 1–12 (MECIGKRVKSRS) the composition is skewed to basic residues. Disordered stretches follow at residues 1 to 74 (MECI…SVPN), 87 to 108 (DLNVEKKSGPSSSRLTDGSEQN), 209 to 330 (GEIE…PIKR), 344 to 376 (RSGSSLTKPRERDNKIQKLNHREEEKKERQREV), 428 to 593 (NVSK…LKDK), and 632 to 654 (EDEADELVSSAEDQSQEQAREDH). Positions 22 to 29 (RKKMETVA) match the Nuclear localization signal 1 motif. Polar residues predominate over residues 95–108 (GPSSSRLTDGSEQN). A compositionally biased stretch (acidic residues) spans 245-266 (SDGEDSSSETDEEEEENQDSED). The stretch at 248–278 (EDSSSETDEEEEENQDSEDNNTKDNVTVESL) forms a coiled coil. Residues 276–301 (ESLSSEDPSSSSSSSSSSSSSSSSSS) show a composition bias toward low complexity. Basic and acidic residues predominate over residues 306–323 (SYVKEVVGDNRDDDDLRK). The Nuclear localization signal 2 motif lies at 328–335 (IKRVSLVE). Residues 351-376 (KPRERDNKIQKLNHREEEKKERQREV) are compositionally biased toward basic and acidic residues. The stretch at 356–377 (DNKIQKLNHREEEKKERQREVV) forms a coiled coil. Residues 428–446 (NVSKYEDSVSINSGKTTGA) show a composition bias toward polar residues. 2 stretches are compositionally biased toward basic and acidic residues: residues 450–463 (PEVENPETGKELNT) and 488–504 (EPSRPEIYSSEKAKEVQ). Residues 576–587 (SSISSGDGYESD) show a composition bias toward low complexity. The Helicase ATP-binding domain occupies 850–1060 (FENSDETGGC…CNVLGLARPK (211 aa)). Residue 863–870 (HAPGTGKT) participates in ATP binding. The DEAH box signature appears at 1011 to 1014 (DEAH). The Nuclear localization signal 3 signature appears at 1132-1139 (QRRVLESI). One can recognise a Helicase C-terminal domain in the interval 1206-1359 (EFVELCEVIK…ELVFACSSRH (154 aa)).

Belongs to the SNF2/RAD54 helicase family. Interacts with NRPD1.

It localises to the nucleus. Functionally, probable chromatin remodeling factor. This Arabidopsis thaliana (Mouse-ear cress) protein is SNF2 domain-containing protein CLASSY 3 (CLSY3).